A 352-amino-acid polypeptide reads, in one-letter code: Biotin synthase (352 aa).

The 219-residue stretch at 44–262 (NRVQVSTLLS…LAVARLLMPK (219 aa)) folds into the Radical SAM core domain. [4Fe-4S] cluster is bound by residues C59, C63, and C66. Residues C103, C134, C194, and R266 each coordinate [2Fe-2S] cluster.

This sequence belongs to the radical SAM superfamily. Biotin synthase family. Homodimer. The cofactor is [4Fe-4S] cluster. [2Fe-2S] cluster is required as a cofactor.

It carries out the reaction (4R,5S)-dethiobiotin + (sulfur carrier)-SH + 2 reduced [2Fe-2S]-[ferredoxin] + 2 S-adenosyl-L-methionine = (sulfur carrier)-H + biotin + 2 5'-deoxyadenosine + 2 L-methionine + 2 oxidized [2Fe-2S]-[ferredoxin]. It participates in cofactor biosynthesis; biotin biosynthesis; biotin from 7,8-diaminononanoate: step 2/2. Functionally, catalyzes the conversion of dethiobiotin (DTB) to biotin by the insertion of a sulfur atom into dethiobiotin via a radical-based mechanism. This Pseudomonas putida (strain W619) protein is Biotin synthase.